The sequence spans 885 residues: Protein PML (885 aa).

A disordered region spans residues 1–48 (METEPVSVQKVPAPPGSPCRQQDSALTPTPTMPPPEEPSEDYEHSQSP). Residue S17 is modified to Phosphoserine; by HIPK2. 2 positions are modified to phosphoserine; by HIPK2 and MAPK1: S45 and S47. 2 residues coordinate Zn(2+): C62 and C65. An RING-type zinc finger spans residues 62–97 (CPSCQAQAKCPKLLPCLHTLCSGCLEAPGLQCPICK). K70 is covalently cross-linked (Glycyl lysine isopeptide (Lys-Gly) (interchain with G-Cter in SUMO); alternate). Residue K70 forms a Glycyl lysine isopeptide (Lys-Gly) (interchain with G-Cter in SUMO2); alternate linkage. 10 residues coordinate Zn(2+): C77, H79, C82, C85, C93, C96, C134, C137, C156, and H160. 2 B box-type zinc fingers span residues 129–171 (DAQA…ARPL) and 188–239 (KSNI…EIQQ). Residue K165 forms a Glycyl lysine isopeptide (Lys-Gly) (interchain with G-Cter in SUMO); alternate linkage. K165 participates in a covalent cross-link: Glycyl lysine isopeptide (Lys-Gly) (interchain with G-Cter in SUMO2); alternate. Residues C193, H198, C219, and H226 each coordinate Zn(2+). A coiled-coil region spans residues 295–331 (QAQERELLEAVNDRYQRDYQEIAGQLSCLEAVLQRIR). Residue K384 forms a Glycyl lysine isopeptide (Lys-Gly) (interchain with G-Cter in SUMO2); alternate linkage. K384 participates in a covalent cross-link: Glycyl lysine isopeptide (Lys-Gly) (interchain with G-Cter in ubiquitin); alternate. S404 is modified (phosphoserine). The disordered stretch occupies residues 404 to 434 (SPEAASNQPEAASTHPVTTSTPEDLEQPKEV). Polar residues predominate over residues 407 to 425 (AASNQPEAASTHPVTTSTP). Residues 458-565 (GAHPVPVYAF…TSDTGETEER (108 aa)) form an interaction with PER2 region. A Glycyl lysine isopeptide (Lys-Gly) (interchain with G-Cter in SUMO2); alternate cross-link involves residue K486. Residue K486 forms a Glycyl lysine isopeptide (Lys-Gly) (interchain with G-Cter in ubiquitin); alternate linkage. The short motif at 486–500 (KRKCSHEDCSRKIIK) is the Nuclear localization signal element. K488 is covalently cross-linked (Glycyl lysine isopeptide (Lys-Gly) (interchain with G-Cter in SUMO2)). Glycyl lysine isopeptide (Lys-Gly) (interchain with G-Cter in SUMO2); alternate cross-links involve residues K497 and K500. N6-acetyllysine; alternate is present on K497. K500 is covalently cross-linked (Glycyl lysine isopeptide (Lys-Gly) (interchain with G-Cter in SUMO); alternate). The tract at residues 500–599 (KMESTEENED…SESSSLQLEG (100 aa)) is disordered. Phosphoserine is present on residues S503 and S514. Residues 512 to 526 (ATSSPEQSWPSTFKA) show a composition bias toward polar residues. S515 carries the post-translational modification Phosphoserine; by MAPK1. S522 is subject to Phosphoserine. At K525 the chain carries N6-acetyllysine. At S528 the chain carries Phosphoserine; by CDK1 and CDK2. Residue T535 is modified to Phosphothreonine. S536 is subject to Phosphoserine. Phosphoserine; by MAPK1 is present on S540. Polar residues predominate over residues 550-559 (PNNNHVTSDT). The segment at 566–572 (VVVISSS) is sumo interaction motif (SIM). A Phosphoserine; by CK2 modification is found at S575. S609 carries the phosphoserine modification.

As to quaternary structure, key component of PML bodies. PML bodies are formed by the interaction of PML homodimers (via SUMO-binding motif) with sumoylated PML, leading to the assembly of higher oligomers. Several types of PML bodies have been observed. PML bodies can form hollow spheres that can sequester target proteins inside. Interacts (via SUMO-binding motif) with sumoylated proteins. Interacts (via C-terminus) with p53/TP53. Recruits p53/TP53 and CHEK2 into PML bodies, which promotes p53/TP53 phosphorylation at 'Ser-20' and prevents its proteasomal degradation. Interacts with MDM2, and sequesters MDM2 in the nucleolus, thereby preventing ubiquitination of p53/TP53. Interaction with PML-RARA oncoprotein and certain viral proteins causes disassembly of PML bodies and abolishes the normal PML function. Interacts with TERT, SIRT1, TOPBP1, TRIM27 and TRIM69. Interacts with ELF4 (via C-terminus). Interacts with Lassa virus Z protein and rabies virus phosphoprotein. Interacts (in the cytoplasm) with TGFBR1, TGFBR2 and PKM. Interacts (via the coiled-coil domain and when sumoylated) with SATB1. Interacts with UBE2I; the interaction is enhanced by arsenic binding. Interacts with SMAD2, SMAD3, DAXX, RPL11, HIPK2 and MTOR. Interacts with ITPR3, PPP1A and RB1. Interacts with RNF4, NLRP3, MAGEA2, RBL2, PER2, E2F4 and MAPK7/BMK1. Interacts with CSNK2A1 and CSNK2A3. Interacts with ANKRD2; the interaction is direct. Interacts with PPARGC1A and KAT2A. Interacts (via SUMO-interacting motif) with sumoylated MORC3. Interacts with TRIM16. Interacts with PRDM1. Interacts (via RING-type zinc finger) with EIF4E; the interaction reduces EIF4E affinity for the 5' m7G cap of mRNA, thus reducing nuclear export of cyclin CCND1. Ubiquitinated; mediated by RNF4, RNF111, UHRF1, UBE3A/E6AP, BCR(KLHL20) E3 ubiquitin ligase complex, SIAH1 or SIAH2 and leading to subsequent proteasomal degradation. 'Lys-6'-, 'Lys-11'-, 'Lys-48'- and 'Lys-63'-linked polyubiquitination by RNF4 is polysumoylation-dependent. Ubiquitination by RNF111 is polysumoylation-dependent. Ubiquitination by BCR(KLHL20) E3 ubiquitin ligase complex requires CDK1/2-mediated phosphorylation at Ser-528 which in turn is recognized by prolyl-isopeptidase PIN1 and PIN1-catalyzed isomerization further potentiates PML interaction with KLHL20. In terms of processing, sumoylation regulates PML's: stability in response to extracellular or intracellular stimuli, transcription directly and indirectly, through sequestration of or dissociation of the transcription factors from PML-NBs, ability to regulate apoptosis and its anti-viral activities. It is also essential for: maintaining proper PML nuclear bodies (PML-NBs) structure and normal function, recruitment of components of PML-NBs, the turnover and retention of PML in PML-NBs and the integrity of PML-NBs. Undergoes 'Lys-11'-linked sumoylation. Sumoylation on all three sites (Lys-70, Lys-165 and Lys-500) is required for nuclear body formation. Sumoylation on Lys-165 is a prerequisite for sumoylation on Lys-70. Lys-70 and Lys-165 are sumoylated by PISA1 and PIAS2. PIAS1-mediated sumoylation of PML promotes its interaction with CSNK2A1/CK2 and phosphorylation at Ser-575 which in turn triggers its ubiquitin-mediated degradation. Sumoylation at Lys-500 by RANBP2 is essential for the proper assembly of PML-NBs. Desumoylated by SENP1, SENP2, SENP3, SENP5 and SENP6. Post-translationally, phosphorylation is a major regulatory mechanism that controls PML protein abundance and the number and size of PML nuclear bodies (PML-NBs). Phosphorylated in response to DNA damage, probably by ATR. HIPK2-mediated phosphorylation at Ser-17, Ser-45 and Ser-47 leads to increased accumulation of PML protein and its sumoylation and is required for the maximal pro-apoptotic activity of PML after DNA damage. MAPK1- mediated phosphorylations at Ser-404, Ser-515 and Ser-540 and CDK1/2-mediated phosphorylation at Ser-528 promote PIN1-dependent PML degradation. CK2-mediated phosphorylation at Ser-575 primes PML ubiquitination via an unidentified ubiquitin ligase. Acetylation at Lys-497 is essential for its nuclear localization. Deacetylated at Lys-497 by SIRT1 and this deacetylation promotes PML control of PER2 nuclear localization.

The protein resides in the nucleus. The protein localises to the nucleoplasm. It localises to the cytoplasm. Its subcellular location is the PML body. It is found in the nucleolus. The protein resides in the endoplasmic reticulum membrane. The protein localises to the early endosome membrane. Functions via its association with PML-nuclear bodies (PML-NBs) in a wide range of important cellular processes, including tumor suppression, transcriptional regulation, apoptosis, senescence, DNA damage response, and viral defense mechanisms. Acts as the scaffold of PML-NBs allowing other proteins to shuttle in and out, a process which is regulated by SUMO-mediated modifications and interactions. Inhibits EIF4E-mediated mRNA nuclear export by reducing EIF4E affinity for the 5' 7-methylguanosine (m7G) cap of target mRNAs. Positively regulates p53/TP53 by acting at different levels (by promoting its acetylation and phosphorylation and by inhibiting its MDM2-dependent degradation). Regulates phosphorylation of ITPR3 and plays a role in the regulation of calcium homeostasis at the endoplasmic reticulum. Regulates RB1 phosphorylation and activity. Acts as both a negative regulator of PPARGC1A acetylation and a potent activator of PPAR signaling and fatty acid oxidation. Regulates translation of HIF1A by sequestering MTOR, and thereby plays a role in neoangiogenesis and tumor vascularization. Regulates PER2 nuclear localization and circadian function. Cytoplasmic PML is involved in the regulation of the TGF-beta signaling pathway. Required for normal development of the brain cortex during embryogenesis. Plays a role in granulopoiesis or monopoiesis of myeloid progenitor cells. May play a role regulating stem and progenitor cell fate in tissues as diverse as blood, brain and breast. Shows antiviral activity towards lymphocytic choriomeningitis virus (LCMV) and the vesicular stomatitis virus (VSV). This Mus musculus (Mouse) protein is Protein PML (Pml).